A 923-amino-acid polypeptide reads, in one-letter code: SPX and EXS domain-containing protein 1 (923 aa).

The SPX domain maps to 1–326; the sequence is MKFGKKLRFE…PMNSSIKLDQ (326 aa). Low complexity-rich tracts occupy residues 94–147 and 186–195; these read QEQS…QQQQ and TTTTTTTTTT. Disordered stretches follow at residues 94–150 and 185–208; these read QEQS…QDLK and PTTTTTTTTTTMNTSAGSGIFKNK. Helical transmembrane passes span 382-402, 416-436, 471-491, 499-519, 529-551, 591-611, 620-640, 655-675, and 700-720; these read LKLGFAIGLSIGILAFVIILF, FVSTIPIFRAVGIPILAVWLW, ASFLTAIWLTMFLLFCGTVTG, PAQVYPLVLVIFFLSVVFFPF, LLFITLGNVIITPFGSTKFRALF, SIALPILSGLPLLWRFMQCIL, IHLGNSTKYAVGFSVVLFSAL, ILWCVCFVLSTLYMYCWDVVV, and WSYYYVLFSNLILRFAWTLTI. Residues 585–785 enclose the EXS domain; the sequence is RCNQVNSIAL…KNEVPKVESP (201 aa). The interval 793–871 is disordered; it reads SSYPYRQDNF…NNSPSGSNSS (79 aa).

The protein belongs to the SYG1 (TC 2.A.94) family.

It localises to the membrane. The sequence is that of SPX and EXS domain-containing protein 1 from Dictyostelium discoideum (Social amoeba).